We begin with the raw amino-acid sequence, 469 residues long: MNPNQKIITIGSVSLTIATACFLMQIAILATTVTLHFKQNECSIPANNQVVPCEPIVIERNITEIVYLNNTTIEKEICPEVVEYRNWSKPQCQITGFAPFSKDNSIRLSAGGDIWVTREPYVSCDPSKCYQFALGQGTTLDNKHSNGTIHDRIPHRTLLMNELGVPFHLGTKQVCIAWSSSSCHDGKAWLHVCVTGDDRNATASFIYDGMLVDSIGSWSQNILRTQESECVCINGTCTVVMTDGSASGRADTRILFIREGKIVHISPLSGSAQHIEECSCYPRYPNVRCVCRDNWKGSNRPVIDINMADYSIDSSYVCSGLVGDTPRNDDSSSSSNCRDPNNERGNPGVKGWAFDNGNDVWMGRTISKDSRSGYETFRVIGGWATANSKSQTNRQVIVDNNNWSGYSGIFSVESKSCINRCFYVELIRGRPQETRVWWTSNSIVVFCGTSGTYGTGSWPDGANINFMPI.

Residues methionine 1–lysine 6 lie on the Intravirion side of the membrane. A helical membrane pass occupies residues isoleucine 7–leucine 29. The segment at glycine 11–valine 33 is involved in apical transport and lipid raft association. Over alanine 30 to isoleucine 469 the chain is Virion surface. The interval histidine 36–serine 88 is hypervariable stalk region. Asparagine 61, asparagine 69, asparagine 70, and asparagine 86 each carry an N-linked (GlcNAc...) asparagine; by host glycan. Residues glutamine 91–isoleucine 469 form a head of neuraminidase region. 8 disulfides stabilise this stretch: cysteine 92-cysteine 417, cysteine 124-cysteine 129, cysteine 183-cysteine 230, cysteine 232-cysteine 237, cysteine 278-cysteine 291, cysteine 280-cysteine 289, cysteine 318-cysteine 337, and cysteine 421-cysteine 447. Arginine 118 is a substrate binding site. The N-linked (GlcNAc...) asparagine; by host glycan is linked to asparagine 146. The active-site Proton donor/acceptor is the aspartate 151. Substrate is bound at residue arginine 152. N-linked (GlcNAc...) asparagine; by host glycosylation is found at asparagine 200 and asparagine 234. Glutamate 276 to glutamate 277 contacts substrate. Arginine 292 provides a ligand contact to substrate. Residues aspartate 293, glycine 297, and aspartate 324 each coordinate Ca(2+). Positions threonine 325 to valine 349 are disordered. Position 371 (arginine 371) interacts with substrate. Asparagine 402 carries N-linked (GlcNAc...) asparagine; by host glycosylation. The active-site Nucleophile is tyrosine 406.

Belongs to the glycosyl hydrolase 34 family. In terms of assembly, homotetramer. Ca(2+) is required as a cofactor. N-glycosylated.

It localises to the virion membrane. The protein resides in the host apical cell membrane. It catalyses the reaction Hydrolysis of alpha-(2-&gt;3)-, alpha-(2-&gt;6)-, alpha-(2-&gt;8)- glycosidic linkages of terminal sialic acid residues in oligosaccharides, glycoproteins, glycolipids, colominic acid and synthetic substrates.. With respect to regulation, inhibited by the neuraminidase inhibitors zanamivir (Relenza) and oseltamivir (Tamiflu). These drugs interfere with the release of progeny virus from infected cells and are effective against all influenza strains. Resistance to neuraminidase inhibitors is quite rare. Catalyzes the removal of terminal sialic acid residues from viral and cellular glycoconjugates. Cleaves off the terminal sialic acids on the glycosylated HA during virus budding to facilitate virus release. Additionally helps virus spread through the circulation by further removing sialic acids from the cell surface. These cleavages prevent self-aggregation and ensure the efficient spread of the progeny virus from cell to cell. Otherwise, infection would be limited to one round of replication. Described as a receptor-destroying enzyme because it cleaves a terminal sialic acid from the cellular receptors. May facilitate viral invasion of the upper airways by cleaving the sialic acid moieties on the mucin of the airway epithelial cells. Likely to plays a role in the budding process through its association with lipid rafts during intracellular transport. May additionally display a raft-association independent effect on budding. Plays a role in the determination of host range restriction on replication and virulence. Sialidase activity in late endosome/lysosome traffic seems to enhance virus replication. This is Neuraminidase from Aves.